A 238-amino-acid chain; its full sequence is Sugar fermentation stimulation protein homolog (238 aa).

The protein belongs to the SfsA family.

The polypeptide is Sugar fermentation stimulation protein homolog (Alteromonas mediterranea (strain DSM 17117 / CIP 110805 / LMG 28347 / Deep ecotype)).